The chain runs to 642 residues: Probable malate:quinone oxidoreductase (642 aa).

A unknown region spans residues M1 to N142. An MQO domain region spans residues M143–A642.

The protein in the C-terminal section; belongs to the MQO family. FAD serves as cofactor.

It carries out the reaction (S)-malate + a quinone = a quinol + oxaloacetate. Its pathway is carbohydrate metabolism; tricarboxylic acid cycle; oxaloacetate from (S)-malate (quinone route): step 1/1. The sequence is that of Probable malate:quinone oxidoreductase (mqo) from Corynebacterium efficiens (strain DSM 44549 / YS-314 / AJ 12310 / JCM 11189 / NBRC 100395).